The following is a 331-amino-acid chain: tRNA uridine(34) hydroxylase (331 aa).

The Rhodanese domain occupies 122 to 218 (KENRCLVLDV…YGQAVGTGKW (97 aa)). Cysteine 178 functions as the Cysteine persulfide intermediate in the catalytic mechanism.

The protein belongs to the TrhO family.

The catalysed reaction is uridine(34) in tRNA + AH2 + O2 = 5-hydroxyuridine(34) in tRNA + A + H2O. In terms of biological role, catalyzes oxygen-dependent 5-hydroxyuridine (ho5U) modification at position 34 in tRNAs. The sequence is that of tRNA uridine(34) hydroxylase from Chlamydia caviae (strain ATCC VR-813 / DSM 19441 / 03DC25 / GPIC) (Chlamydophila caviae).